The chain runs to 406 residues: COP9 signalosome complex subunit 4 (406 aa).

Ala-2 carries the N-acetylalanine modification. Lys-25 is subject to N6-acetyllysine. In terms of domain architecture, PCI spans 197 to 366 (YRRKFIEAAQ…GIVHFETREA (170 aa)).

The protein belongs to the CSN4 family. Component of the CSN complex, composed of COPS1/GPS1, COPS2, COPS3, COPS4, COPS5, COPS6, COPS7 (COPS7A or COPS7B), COPS8 and COPS9. In the complex, it probably interacts directly with COPS1, COPS2, COPS3, COPS5, COPS6, COPS7 (COPS7A or COPS7B) and COPS8. Interacts with TOR1A; the interaction is direct and associates TOR1A and SNAPIN with the CSN complex. Interacts with STON2; controls STON2 neddylation levels. Interacts with ERCC6.

It localises to the cytoplasm. The protein resides in the nucleus. It is found in the cytoplasmic vesicle. The protein localises to the secretory vesicle. Its subcellular location is the synaptic vesicle. Its function is as follows. Component of the COP9 signalosome complex (CSN), a complex involved in various cellular and developmental processes. The CSN complex is an essential regulator of the ubiquitin (Ubl) conjugation pathway by mediating the deneddylation of the cullin subunits of SCF-type E3 ligase complexes, leading to decrease the Ubl ligase activity of SCF-type complexes such as SCF, CSA or DDB2. Also involved in the deneddylation of non-cullin subunits such as STON2. The complex is also involved in phosphorylation of p53/TP53, c-jun/JUN, IkappaBalpha/NFKBIA, ITPK1, IRF8/ICSBP and SNAPIN, possibly via its association with CK2 and PKD kinases. CSN-dependent phosphorylation of TP53 and JUN promotes and protects degradation by the Ubl system, respectively. This chain is COP9 signalosome complex subunit 4 (COPS4), found in Bos taurus (Bovine).